The chain runs to 270 residues: Mediator of RNA polymerase II transcription subunit 4 (270 aa).

A disordered region spans residues 1–22; it reads MAASSSGEKEKERMGGVSGMTG. Ala2 carries the post-translational modification N-acetylalanine. Residues 26–131 are a coiled coil; the sequence is TRERLLSALE…ATAVYQAKEK (106 aa). A Phosphoserine modification is found at Ser32. Residues 227–270 form a disordered region; it reads MSVNMLPPNHSTDFLLEPPGHNKENEDDVEVMSTDSSSSSSDSD. Low complexity predominate over residues 259-270; that stretch reads STDSSSSSSDSD.

This sequence belongs to the Mediator complex subunit 4 family. As to quaternary structure, component of the Mediator complex, which is composed of MED1, MED4, MED6, MED7, MED8, MED9, MED10, MED11, MED12, MED13, MED13L, MED14, MED15, MED16, MED17, MED18, MED19, MED20, MED21, MED22, MED23, MED24, MED25, MED26, MED27, MED29, MED30, MED31, CCNC, CDK8 and CDC2L6/CDK11. The MED12, MED13, CCNC and CDK8 subunits form a distinct module termed the CDK8 module. Mediator containing the CDK8 module is less active than Mediator lacking this module in supporting transcriptional activation. Individual preparations of the Mediator complex lacking one or more distinct subunits have been variously termed ARC, CRSP, DRIP, PC2, SMCC and TRAP.

It is found in the nucleus. Functionally, component of the Mediator complex, a coactivator involved in the regulated transcription of nearly all RNA polymerase II-dependent genes. Mediator functions as a bridge to convey information from gene-specific regulatory proteins to the basal RNA polymerase II transcription machinery. Mediator is recruited to promoters by direct interactions with regulatory proteins and serves as a scaffold for the assembly of a functional preinitiation complex with RNA polymerase II and the general transcription factors. The protein is Mediator of RNA polymerase II transcription subunit 4 (Med4) of Rattus norvegicus (Rat).